We begin with the raw amino-acid sequence, 303 residues long: Trans-aconitate 2-methyltransferase (303 aa).

The tract at residues glutamate 271–arginine 303 is disordered. The segment covering glycine 272–arginine 303 has biased composition (gly residues).

Belongs to the methyltransferase superfamily. Tam family.

The protein resides in the cytoplasm. It carries out the reaction trans-aconitate + S-adenosyl-L-methionine = (E)-3-(methoxycarbonyl)pent-2-enedioate + S-adenosyl-L-homocysteine. Catalyzes the S-adenosylmethionine monomethyl esterification of trans-aconitate. The protein is Trans-aconitate 2-methyltransferase of Streptomyces coelicolor (strain ATCC BAA-471 / A3(2) / M145).